The chain runs to 315 residues: Acetyl-coenzyme A carboxylase carboxyl transferase subunit alpha (315 aa).

Residues 36–289 enclose the CoA carboxyltransferase C-terminal domain; the sequence is LSKKRLELME…RKAVAAELKI (254 aa).

This sequence belongs to the AccA family. In terms of assembly, acetyl-CoA carboxylase is a heterohexamer composed of biotin carboxyl carrier protein (AccB), biotin carboxylase (AccC) and two subunits each of ACCase subunit alpha (AccA) and ACCase subunit beta (AccD).

The protein localises to the cytoplasm. The catalysed reaction is N(6)-carboxybiotinyl-L-lysyl-[protein] + acetyl-CoA = N(6)-biotinyl-L-lysyl-[protein] + malonyl-CoA. The protein operates within lipid metabolism; malonyl-CoA biosynthesis; malonyl-CoA from acetyl-CoA: step 1/1. Its function is as follows. Component of the acetyl coenzyme A carboxylase (ACC) complex. First, biotin carboxylase catalyzes the carboxylation of biotin on its carrier protein (BCCP) and then the CO(2) group is transferred by the carboxyltransferase to acetyl-CoA to form malonyl-CoA. This chain is Acetyl-coenzyme A carboxylase carboxyl transferase subunit alpha, found in Francisella tularensis subsp. tularensis (strain FSC 198).